Here is a 629-residue protein sequence, read N- to C-terminus: MEKNQQSTAEQYSEQIEQLMELGRTQGYLTFAEINDLLPEDAIDPEYYDKLLQTLQNDAGIPVLDEAPESDDMMLSDTIPDEDAVEEATQILSNVESEIGRTTDPVRMYMREMGTVDLLTREDEISIAKRIEGGIDEVQTSISAYPEALNGLLKNYDDVEKGNFRLTDLITGFVDPNAEIEEHNGLDEDFSDEDDEEESSNADVEDNEDEEDNESESTSDSSDSDNSIDPEVAREKFQQLREQHSKTLAVIEKHGRSGKRAQDQIALLGEIFKQFRLVPKQFDLLVLSMKEMMKRVRYQERQLQKILVDIAGMPKDDFEKIITTNGSNSEWVAKALKSSKPWAKRLIKYEDRIYEALNNLAITEENTKLTITQMRDICDAVARGEQKARRAKKEMVEANLRLVISIAKKYTNRGLQFLDLIQEGNIGLMKAVDKFEYRRGYKFSTYATWWIRQAITRSIADQARTIRIPVHMIETINKLNRISRQLLQEMGREATPEELAERMGMPEDKIRKVLKIAKEPISMETPIGDDDDSHLGDFIEDSTLELPLDSATAQSLKVATHEVLEGLTPREAKVLRMRFGIDMNTDHTLEEVGKQFDVTRERIRQIEAKALRKLRHPSRSETLRSFLDE.

Residues 183-228 (HNGLDEDFSDEDDEEESSNADVEDNEDEEDNESESTSDSSDSDNSI) form a disordered region. Positions 187-228 (DEDFSDEDDEEESSNADVEDNEDEEDNESESTSDSSDSDNSI) are enriched in acidic residues. Residues 395–465 (MVEANLRLVI…TRSIADQART (71 aa)) are sigma-70 factor domain-2. Positions 419 to 422 (DLIQ) match the Interaction with polymerase core subunit RpoC motif. Residues 474-550 (ETINKLNRIS…DSTLELPLDS (77 aa)) form a sigma-70 factor domain-3 region. The interval 563 to 616 (VLEGLTPREAKVLRMRFGIDMNTDHTLEEVGKQFDVTRERIRQIEAKALRKLRH) is sigma-70 factor domain-4. Residues 589 to 608 (LEEVGKQFDVTRERIRQIEA) constitute a DNA-binding region (H-T-H motif).

This sequence belongs to the sigma-70 factor family. RpoD/SigA subfamily. Interacts transiently with the RNA polymerase catalytic core.

The protein localises to the cytoplasm. Functionally, sigma factors are initiation factors that promote the attachment of RNA polymerase to specific initiation sites and are then released. This sigma factor is the primary sigma factor during exponential growth. This chain is RNA polymerase sigma factor RpoD, found in Haemophilus influenzae (strain ATCC 51907 / DSM 11121 / KW20 / Rd).